The chain runs to 323 residues: tRNA dimethylallyltransferase (323 aa).

Position 18-25 (18-25 (GPTASGKT)) interacts with ATP. Residue 20 to 25 (TASGKT) coordinates substrate. The interaction with substrate tRNA stretch occupies residues 44–47 (DSAL).

This sequence belongs to the IPP transferase family. Monomer. Mg(2+) is required as a cofactor.

It catalyses the reaction adenosine(37) in tRNA + dimethylallyl diphosphate = N(6)-dimethylallyladenosine(37) in tRNA + diphosphate. Functionally, catalyzes the transfer of a dimethylallyl group onto the adenine at position 37 in tRNAs that read codons beginning with uridine, leading to the formation of N6-(dimethylallyl)adenosine (i(6)A). This is tRNA dimethylallyltransferase from Blochmanniella floridana.